A 279-amino-acid polypeptide reads, in one-letter code: Thymidylate synthase (279 aa).

133 to 134 (RR) provides a ligand contact to dUMP. The active-site Nucleophile is the C154. Residues 178–181 (RSND), N189, and 219–221 (HIY) contribute to the dUMP site. Residue D181 participates in (6R)-5,10-methylene-5,6,7,8-tetrahydrofolate binding. (6R)-5,10-methylene-5,6,7,8-tetrahydrofolate is bound at residue A278.

This sequence belongs to the thymidylate synthase family. Bacterial-type ThyA subfamily. In terms of assembly, homodimer.

The protein resides in the cytoplasm. It catalyses the reaction dUMP + (6R)-5,10-methylene-5,6,7,8-tetrahydrofolate = 7,8-dihydrofolate + dTMP. The protein operates within pyrimidine metabolism; dTTP biosynthesis. Catalyzes the reductive methylation of 2'-deoxyuridine-5'-monophosphate (dUMP) to 2'-deoxythymidine-5'-monophosphate (dTMP) while utilizing 5,10-methylenetetrahydrofolate (mTHF) as the methyl donor and reductant in the reaction, yielding dihydrofolate (DHF) as a by-product. This enzymatic reaction provides an intracellular de novo source of dTMP, an essential precursor for DNA biosynthesis. This chain is Thymidylate synthase, found in Streptococcus sanguinis (strain SK36).